The following is a 201-amino-acid chain: Histidinol dehydrogenase (201 aa).

It belongs to the histidinol dehydrogenase family. In terms of assembly, homodimer. It depends on Zn(2+) as a cofactor.

The enzyme catalyses L-histidinol + 2 NAD(+) + H2O = L-histidine + 2 NADH + 3 H(+). It participates in amino-acid biosynthesis; L-histidine biosynthesis; L-histidine from 5-phospho-alpha-D-ribose 1-diphosphate: step 9/9. Functionally, catalyzes the sequential NAD-dependent oxidations of L-histidinol to L-histidinaldehyde and then to L-histidine. The sequence is that of Histidinol dehydrogenase (hisD) from Buchnera aphidicola subsp. Diuraphis noxia.